An 897-amino-acid chain; its full sequence is 3'-5' exonuclease DinG (897 aa).

An Exonuclease domain is found at 8–161 (VVDLETTGNQ…DEDAATTAKL (154 aa)). Positions 241 to 496 (SKAVDQLGLT…KAIDQLEKQR (256 aa)) constitute a Helicase ATP-binding domain. 276-283 (ASLGSGKS) is an ATP binding site. Positions 448-451 (DEAH) match the DEAH box motif. Residues 703 to 883 (NIDEYVASIV…NYRQKKGDIQ (181 aa)) enclose the Helicase C-terminal domain.

Belongs to the helicase family. DinG subfamily. Type 2 sub-subfamily.

Its function is as follows. 3'-5' exonuclease. The protein is 3'-5' exonuclease DinG of Staphylococcus aureus (strain bovine RF122 / ET3-1).